Consider the following 148-residue polypeptide: Large ribosomal subunit protein uL15 (148 aa).

Positions 1 to 50 are disordered; sequence MNLSNLKPAEGSTKTRKRIGRGPGSGLGGTSTRGHKGAKSRSGYSKKIGF. Residues 21 to 31 are compositionally biased toward gly residues; the sequence is RGPGSGLGGTS.

Belongs to the universal ribosomal protein uL15 family. Part of the 50S ribosomal subunit.

Binds to the 23S rRNA. The protein is Large ribosomal subunit protein uL15 of Bacteroides fragilis (strain ATCC 25285 / DSM 2151 / CCUG 4856 / JCM 11019 / LMG 10263 / NCTC 9343 / Onslow / VPI 2553 / EN-2).